A 270-amino-acid chain; its full sequence is MSDLHNESIFITGGGSGLGLALVERFIEEGAQVATLELSAAKVASLRQRFGEHILAVEGNVTCYADYQRALDQILTRSGKLDCFIGNAGIWDHNASLVNTPAETLETGFHELFNVNVLGYLLSAKACAPALIASEGSMIFTLSNAAWYPGGGGPLYTASKHAATGLIRQLAYELAPKVRVNGVGPCGMASDLRGPQALGQSETSIMQSLTPEKIAAILPLQFFPQPADFTGPYVMLASRRNNRALSGVMINADAGLAIRGIRHVAAGLDL.

NAD(+) is bound at residue 10 to 34 (FITGGGSGLGLALVERFIEEGAQVA). Ser143 lines the substrate pocket. The active-site Proton acceptor is the Tyr156.

Belongs to the short-chain dehydrogenases/reductases (SDR) family.

It carries out the reaction 3-(cis-5,6-dihydroxycyclohexa-1,3-dien-1-yl)propanoate + NAD(+) = 3-(2,3-dihydroxyphenyl)propanoate + NADH + H(+). The enzyme catalyses (2E)-3-(cis-5,6-dihydroxycyclohexa-1,3-dien-1-yl)prop-2-enoate + NAD(+) = (2E)-3-(2,3-dihydroxyphenyl)prop-2-enoate + NADH + H(+). It functions in the pathway aromatic compound metabolism; 3-phenylpropanoate degradation. In terms of biological role, converts 3-phenylpropionate-dihydrodiol (PP-dihydrodiol) and cinnamic acid-dihydrodiol (CI-dihydrodiol) into 3-(2,3-dihydroxylphenyl)propanoic acid (DHPP) and 2,3-dihydroxicinnamic acid (DHCI), respectively. In Escherichia coli O7:K1 (strain IAI39 / ExPEC), this protein is 3-phenylpropionate-dihydrodiol/cinnamic acid-dihydrodiol dehydrogenase.